We begin with the raw amino-acid sequence, 820 residues long: Sodium/hydrogen exchanger 1 (820 aa).

At 1–102 the chain is on the extracellular side; that stretch reads MMLRWSGIWG…FPVLDIDYLH (102 aa). Residues 44 to 71 form a disordered region; it reads ASTIRGSEPPRERSIGDVTTAPSEPLHH. A helical transmembrane segment spans residues 103-125; the sequence is VRTPFEISLWILLACLMKIGFHV. The Cytoplasmic portion of the chain corresponds to 126-134; sequence IPTISSIVP. A helical transmembrane segment spans residues 135 to 152; sequence ESCLLIVVGLLVGGLIKG. Topologically, residues 153 to 162 are extracellular; that stretch reads VGETPPFLQS. The chain crosses the membrane as a helical span at residues 163-180; it reads DVFFLFLLPPIILDAGYF. Over 181–190 the chain is Cytoplasmic; sequence LPLRQFTENL. The chain crosses the membrane as a helical span at residues 191-219; the sequence is GTILIFAVVGTLWNAFFLGGLLYAVCLVG. The Extracellular portion of the chain corresponds to 220-226; the sequence is GEQINNI. A helical transmembrane segment spans residues 227 to 253; it reads GLLDTLLFGSIISAVDPVAVLAVFEEI. The Cytoplasmic portion of the chain corresponds to 254-256; the sequence is HIN. The helical transmembrane segment at 257 to 287 threads the bilayer; it reads ELLHILVFGESLLNDAVTVVLYHLFEEFASY. Residues 288–291 lie on the Extracellular side of the membrane; sequence EYVG. A helical membrane pass occupies residues 292 to 326; that stretch reads ISDIFLGFLSFFVVSLGGVFVGVVYGVIAAFTSRF. The Cytoplasmic portion of the chain corresponds to 327–332; that stretch reads TSHIRV. A helical membrane pass occupies residues 333-345; sequence IEPLFVFLYSYMA. At 346-354 the chain is on the extracellular side; it reads YLSAELFHL. Residues 355-375 form a helical membrane-spanning segment; sequence SGIMALIASGVVMRPYVEANI. Residues 376 to 377 are Cytoplasmic-facing; that stretch reads SH. The chain crosses the membrane as a helical span at residues 378-408; sequence KSHTTIKYFLKMWSSVSETLIFIFLGVSTVA. Over 409–414 the chain is Extracellular; it reads GSHQWN. A helical transmembrane segment spans residues 415 to 442; that stretch reads WTFVISTLLFCLIARVLGVLVLTWFINK. Topologically, residues 443 to 448 are cytoplasmic; sequence FRIVKL. A helical membrane pass occupies residues 449 to 473; sequence TPKDQFIIAYGGLRGAIAFSLGYLL. The Extracellular segment spans residues 474 to 479; sequence DKKHFP. Residues 480-509 traverse the membrane as a helical segment; sequence MCDLFLTAIITVIFFTVFVQGMTIRPLVDL. Positions 505-571 are interaction with TESC; it reads PLVDLLAVKK…VKKCLIAGER (67 aa). Residues 510–820 lie on the Cytoplasmic side of the membrane; sequence LAVKKKQETK…EGEPFIPKGQ (311 aa). The tract at residues 513–520 is PI(4,5)P2-binding region; it reads KKKQETKR. The interaction with CHP2 stretch occupies residues 519-549; the sequence is KRSINEEIHTQFLDHLLTGIEDICGHYGHHH. Residues 544–549 form a confers pH-dependent PI(4,5)P2 binding region; sequence HYGHHH. Positions 556–564 are PI(4,5)P2-binding region; the sequence is RFNKKYVKK. 2 positions are modified to phosphoserine: serine 603 and serine 606. Threonine 607 bears the Phosphothreonine mark. A phosphoserine mark is found at serine 609 and serine 652. Positions 637-820 are interaction with TESC; sequence KILRSNLQKT…EGEPFIPKGQ (184 aa). Residues 637 to 820 are interaction with CALM1; the sequence is KILRSNLQKT…EGEPFIPKGQ (184 aa). Positions 688–691 are interaction with PPP3CA; that stretch reads LTVP. 3 positions are modified to phosphoserine: serine 697, serine 701, and serine 707. Residues 719–724 are interaction with PPP3CA; the sequence is PVITID. A phosphoserine mark is found at serine 727, serine 730, and serine 733. Positions 747–820 are disordered; sequence GLKRGPRTTP…EGEPFIPKGQ (74 aa). 2 positions are modified to phosphothreonine: threonine 755 and threonine 784. Residues serine 790 and serine 801 each carry the phosphoserine modification.

The protein belongs to the monovalent cation:proton antiporter 1 (CPA1) transporter (TC 2.A.36) family. In terms of assembly, homodimer; dimerization is crucial for its function. Oligomer. Interacts with CALM1 in a calcium-dependent manner. Interacts with TESC. Interacts (via residues 504-563) with CHP1. The interaction with CHP1 occurs at the plasma membrane in a calcium-dependent manner. Interacts with CHP2. The interaction with CHP2 occurs in a calcium-dependent manner. Interacts with EZR; regulates the cytoskeletal interactions of SLC9A1 and promotes stress fiber formation. In terms of processing, N-glycosylated and O-glycosylated in the N-terminal region. Post-translationally, ubiquitinated, leading to its degradation by the proteasome. Ubiquitination is reduced by CHP1. Palmitoylated; may play a major role in SLC9A1 regulation. In terms of processing, phosphorylation at Thr-784 increases SLC9A1 activity; specifically dephosphorylated by PPP3CA. Specifically dephosphorylated at Thr-784 by PPP3CA that negatively regulates SLC9A1 activity. Phosphorylation at Ser-652 by AKT1 reduces SLC9A1 binding to CALM1. As to expression, widely expressed.

The protein localises to the cell membrane. It is found in the basolateral cell membrane. It catalyses the reaction Na(+)(in) + H(+)(out) = Na(+)(out) + H(+)(in). It carries out the reaction Li(+)(out) + H(+)(in) = Li(+)(in) + H(+)(out). The catalysed reaction is Li(+)(in) + Na(+)(out) = Li(+)(out) + Na(+)(in). With respect to regulation, activated at acidic pHs. Inhibited by cariporide and eniporide. Inhibited by amiloride and 5-amino-substituted derivatives. Phosphatidylinositol 4,5-bisphosphate (PI(4,5)P2) bind and activates SLC9A1 transporter activity. In terms of biological role, electroneutral Na(+) /H(+) antiporter that extrudes Na(+) in exchange for external protons driven by the inward sodium ion chemical gradient, protecting cells from acidification that occurs from metabolism. Exchanges intracellular H(+) ions for extracellular Na(+) in 1:1 stoichiometry. Plays a key role in maintening intracellular pH neutral and cell volume, and thus is important for cell growth, proliferation, migration and survival. In addition, can transport lithium Li(+) and also functions as a Na(+)/Li(+) antiporter. SLC9A1 also functions in membrane anchoring and organization of scaffolding complexes that coordinate signaling inputs. This is Sodium/hydrogen exchanger 1 (Slc9a1) from Rattus norvegicus (Rat).